A 312-amino-acid chain; its full sequence is Pyridoxal kinase (312 aa).

N-acetylmethionine is present on Met-1. Residues Ser-12 and Thr-47 each contribute to the pyridoxal site. Thr-47 provides a ligand contact to pyridoxal 5'-phosphate. Ser-59 carries the phosphoserine modification. ATP is bound at residue Asp-113. Asp-113 contributes to the Na(+) binding site. Asp-118 contacts Mg(2+). Thr-148 is a Na(+) binding site. 150 to 153 (NQFE) contributes to the ATP binding site. Ser-164 carries the post-translational modification Phosphoserine. Na(+) is bound at residue Thr-186. 186–187 (TS) is an ATP binding site. Ser-213 is subject to Phosphoserine. ATP is bound by residues 226-228 (VEA) and Thr-233. Residue 234–235 (GD) coordinates pyridoxal 5'-phosphate. Asp-235 acts as the Proton acceptor in catalysis. Residue Ser-285 is modified to Phosphoserine.

This sequence belongs to the pyridoxine kinase family. As to quaternary structure, homodimer. Zn(2+) is required as a cofactor. Mg(2+) serves as cofactor.

It localises to the cytoplasm. Its subcellular location is the cytosol. The catalysed reaction is pyridoxal + ATP = pyridoxal 5'-phosphate + ADP + H(+). The enzyme catalyses pyridoxamine + ATP = pyridoxamine 5'-phosphate + ADP + H(+). It catalyses the reaction pyridoxine + ATP = pyridoxine 5'-phosphate + ADP + H(+). It participates in cofactor metabolism; pyridoxal 5'-phosphate salvage; pyridoxal 5'-phosphate from pyridoxal: step 1/1. Its pathway is cofactor metabolism; pyridoxal 5'-phosphate salvage; pyridoxine 5'-phosphate from pyridoxine: step 1/1. The protein operates within cofactor metabolism; pyridoxal 5'-phosphate salvage; pyridoxamine 5'-phosphate from pyridoxamine: step 1/1. Activity is increased in the presence of K(+)or Na(+). Its function is as follows. Catalyzes the phosphorylation of the dietary vitamin B6 vitamers pyridoxal (PL), pyridoxine (PN) and pyridoxamine (PM) to form pyridoxal 5'-phosphate (PLP), pyridoxine 5'-phosphate (PNP) and pyridoxamine 5'-phosphate (PMP), respectively. PLP is the active form of vitamin B6, and acts as a cofactor for over 140 different enzymatic reactions. This is Pyridoxal kinase from Mus musculus (Mouse).